We begin with the raw amino-acid sequence, 245 residues long: tRNA pseudouridine synthase A (245 aa).

The Nucleophile role is filled by aspartate 52. Tyrosine 111 is a binding site for substrate.

The protein belongs to the tRNA pseudouridine synthase TruA family. In terms of assembly, homodimer.

The enzyme catalyses uridine(38/39/40) in tRNA = pseudouridine(38/39/40) in tRNA. Its function is as follows. Formation of pseudouridine at positions 38, 39 and 40 in the anticodon stem and loop of transfer RNAs. This is tRNA pseudouridine synthase A from Rhodopseudomonas palustris (strain BisB5).